The primary structure comprises 74 residues: DNA-directed RNA polymerase subunit omega (74 aa).

This sequence belongs to the RNA polymerase subunit omega family. As to quaternary structure, the RNAP catalytic core consists of 2 alpha, 1 beta, 1 beta' and 1 omega subunit. When a sigma factor is associated with the core the holoenzyme is formed, which can initiate transcription.

It catalyses the reaction RNA(n) + a ribonucleoside 5'-triphosphate = RNA(n+1) + diphosphate. Promotes RNA polymerase assembly. Latches the N- and C-terminal regions of the beta' subunit thereby facilitating its interaction with the beta and alpha subunits. The polypeptide is DNA-directed RNA polymerase subunit omega (Helicobacter pylori (strain Shi470)).